A 107-amino-acid chain; its full sequence is Putative double-stranded DNA mimic protein HS_0995 (107 aa).

The protein belongs to the putative dsDNA mimic protein family.

In terms of biological role, may act as a double-stranded DNA (dsDNA) mimic. Probably regulates the activity of a dsDNA-binding protein. The protein is Putative double-stranded DNA mimic protein HS_0995 of Histophilus somni (strain 129Pt) (Haemophilus somnus).